A 473-amino-acid polypeptide reads, in one-letter code: 6-phospho-beta-glucosidase (473 aa).

Glu-174 serves as the catalytic Proton donor. The Nucleophile role is filled by Glu-366.

The protein belongs to the glycosyl hydrolase 1 family.

The enzyme catalyses 6-phospho-beta-D-glucosyl-(1-&gt;4)-D-glucose + H2O = D-glucose 6-phosphate + D-glucose. The sequence is that of 6-phospho-beta-glucosidase (abgA) from Clostridium longisporum.